The chain runs to 1026 residues: DNA cross-link repair 1A protein (1026 aa).

The interval 1-189 (MLEDTWEEEI…RDSKEPLGSP (189 aa)) is nuclear localization region. The tract at residues 12 to 110 (EYKSKRKPKP…HRTRRGKQVT (99 aa)) is disordered. The span at 34-65 (SVEKSTDGKHQSKGNEKRTSENPGKTKDHKVC) shows a compositional bias: basic and acidic residues. Positions 71–82 (SQISAGSSQSSS) are enriched in low complexity. The segment covering 98 to 107 (KKQHRTRRGK) has biased composition (basic residues). The UBZ4-type zinc finger occupies 118–148 (DGYCPSCQMPFSSLLGQTPQWHVFECLDSPP). Cys121, Cys124, His139, and Cys143 together coordinate Zn(2+). Residues Lys359, Lys434, and Lys522 each participate in a glycyl lysine isopeptide (Lys-Gly) (interchain with G-Cter in SUMO2) cross-link. Residues 401 to 602 (SQEDLPHTDA…SSLSDLEFDA (202 aa)) form a nuclear focus formation region. Disordered stretches follow at residues 474–542 (PLEK…SKKV), 560–590 (ETSLRESASEGPNVSPVVSPNQKRPRLCKRK), and 602–651 (AKNL…PELG). Positions 527 to 540 (SPSSPKCSPSQPSK) are enriched in low complexity. Polar residues predominate over residues 569–581 (EGPNVSPVVSPNQ). Ser574 and Ser578 each carry phosphoserine. The span at 619–628 (RQHRRKRHKT) shows a compositional bias: basic residues. Residue Lys657 forms a Glycyl lysine isopeptide (Lys-Gly) (interchain with G-Cter in SUMO2) linkage.

This sequence belongs to the DNA repair metallo-beta-lactamase (DRMBL) family. As to quaternary structure, binds constitutively to TP53BP1. Binds CDC27, which is itself a component of the anaphase promoting complex (APC). Binds PIAS1.

It localises to the nucleus. The catalysed reaction is a beta-lactam + H2O = a substituted beta-amino acid. Functionally, may be required for DNA interstrand cross-link repair. Also required for checkpoint mediated cell cycle arrest in early prophase in response to mitotic spindle poisons. This Mus musculus (Mouse) protein is DNA cross-link repair 1A protein (Dclre1a).